The primary structure comprises 60 residues: Small ribosomal subunit protein eS31 (60 aa).

Residues Cys-27, Cys-30, Cys-45, and Cys-48 each contribute to the Zn(2+) site. The segment at 27-48 adopts a C4-type zinc-finger fold; the sequence is CPRCGPGVFMAEHLNRYACGKC.

It belongs to the eukaryotic ribosomal protein eS31 family. As to quaternary structure, part of the 30S ribosomal subunit. Requires Zn(2+) as cofactor.

This Methanocaldococcus jannaschii (strain ATCC 43067 / DSM 2661 / JAL-1 / JCM 10045 / NBRC 100440) (Methanococcus jannaschii) protein is Small ribosomal subunit protein eS31.